The chain runs to 146 residues: Hemoglobin subunit beta (146 aa).

Val-1 carries the post-translational modification N-acetylvaline. The region spanning 2–146 (HLTADEKAAV…VATALAHKYH (145 aa)) is the Globin domain. At Thr-12 the chain carries Phosphothreonine. Ser-44 is modified (phosphoserine). Lys-59 is modified (N6-acetyllysine). His-63 serves as a coordination point for heme b. Lys-82 is subject to N6-acetyllysine. His-92 lines the heme b pocket. At Cys-93 the chain carries S-nitrosocysteine. An N6-acetyllysine modification is found at Lys-144.

Belongs to the globin family. As to quaternary structure, heterotetramer of two alpha chains and two beta chains. Red blood cells.

In terms of biological role, involved in oxygen transport from the lung to the various peripheral tissues. The chain is Hemoglobin subunit beta (HBB) from Cephalopachus bancanus (Western tarsier).